The following is a 98-amino-acid chain: Cysteine-rich and transmembrane domain-containing protein WIH2 (98 aa).

Residues 1-77 (MSQYNQPPVG…PPQHQQQQSS (77 aa)) form a disordered region. Over residues 9–21 (VGVPPPQGYPPEG) the composition is skewed to pro residues. Positions 37–55 (YPQQGYPPQGYPQQGYPQQ) are enriched in low complexity. Positions 56–70 (GYPPPYAPQYPPPPQ) are enriched in pro residues. Residues 75–92 (QSSPGFLEGCLAALCCCC) form a helical membrane-spanning segment.

The protein belongs to the CYSTM1 family. Expressed in floral organ primordia.

It localises to the membrane. Required for the promotion of megasporogenesis, or promotion of germ cell formation from somatic precursor cells. Acts redundantly with WIH1. Functions in a genetic pathway downstream of SPL/NZZ and WUS and together with TRN2 in promoting megasporogenesis. This chain is Cysteine-rich and transmembrane domain-containing protein WIH2, found in Arabidopsis thaliana (Mouse-ear cress).